The sequence spans 330 residues: D-lactate dehydrogenase (330 aa).

NAD(+) contacts are provided by residues 156–157, Asp176, 206–207, 233–235, and Asp259; these read RI, VP, and AAR. The active site involves Arg235. Glu264 is an active-site residue. The active-site Proton donor is His296.

It belongs to the D-isomer specific 2-hydroxyacid dehydrogenase family.

It catalyses the reaction (R)-lactate + NAD(+) = pyruvate + NADH + H(+). This is D-lactate dehydrogenase (ldhD) from Staphylococcus aureus (strain MRSA252).